We begin with the raw amino-acid sequence, 391 residues long: Processive diacylglycerol beta-glucosyltransferase (391 aa).

Belongs to the glycosyltransferase 28 family. UgtP subfamily.

The protein resides in the cell membrane. It carries out the reaction a 1,2-diacyl-3-O-(beta-D-glucopyranosyl)-sn-glycerol + UDP-alpha-D-glucose = a 1,2-diacyl-3-O-(beta-D-Glc-(1-&gt;6)-beta-D-Glc)-sn-glycerol + UDP + H(+). It catalyses the reaction a 1,2-diacyl-sn-glycerol + UDP-alpha-D-glucose = a 1,2-diacyl-3-O-(beta-D-glucopyranosyl)-sn-glycerol + UDP + H(+). The protein operates within glycolipid metabolism; diglucosyl-diacylglycerol biosynthesis. In terms of biological role, processive glucosyltransferase involved in the biosynthesis of both the bilayer- and non-bilayer-forming membrane glucolipids. Is able to successively transfer two glucosyl residues to diacylglycerol (DAG), thereby catalyzing the formation of beta-monoglucosyl-DAG (3-O-(beta-D-glucopyranosyl)-1,2-diacyl-sn-glycerol) and beta-diglucosyl-DAG (3-O-(beta-D-glucopyranosyl-beta-(1-&gt;6)-D-glucopyranosyl)-1,2-diacyl-sn-glycerol). Beta-diglucosyl-DAG is the predominant glycolipid found in Bacillales and is also used as a membrane anchor for lipoteichoic acid (LTA). This chain is Processive diacylglycerol beta-glucosyltransferase, found in Staphylococcus aureus (strain bovine RF122 / ET3-1).